The following is a 361-amino-acid chain: Probable G-protein coupled receptor 25 (361 aa).

The Extracellular segment spans residues 1–39; sequence MAPTEPWSPSPGSAPWDYSGLDGLEELELCPAGDLPYGY. A helical transmembrane segment spans residues 40–60; the sequence is VYIPALYLAAFAVGLLGNAFV. Residues 61–75 lie on the Cytoplasmic side of the membrane; the sequence is VWLLAGRRGPRRLVD. The helical transmembrane segment at 76–96 threads the bilayer; that stretch reads TFVLHLAAADLGFVLTLPLWA. The Extracellular portion of the chain corresponds to 97 to 126; sequence AAAALGGRWPFGDGLCKLSSFALAGTRCAG. A helical membrane pass occupies residues 127 to 147; that stretch reads ALLLAGMSVDRYLAVVKLLEA. At 148–155 the chain is on the cytoplasmic side; it reads RPLRTPRC. The helical transmembrane segment at 156-176 threads the bilayer; sequence ALASCCGVWAVALLAGLPSLV. The Extracellular portion of the chain corresponds to 177-200; that stretch reads YRGLQPLPGGQDSQCGEEPSHAFQ. The helical transmembrane segment at 201 to 220 threads the bilayer; sequence GLSLLLLLLTFVLPLVVTLF. Topologically, residues 221-242 are cytoplasmic; that stretch reads CYCRISRRLRRPPHVGRARRNS. Residues 243-263 traverse the membrane as a helical segment; the sequence is LRIIFAIESTFVGSWLPFSAL. Topologically, residues 264–289 are extracellular; that stretch reads RAVFHLARLGALPLPCPLLLALRWGL. Residues 290–310 traverse the membrane as a helical segment; the sequence is TIATCLAFVNSCANPLIYLLL. Residues 311–361 are Cytoplasmic-facing; that stretch reads DRSFRARALDGACGRTGRLARRISSASSLSRDDSSVFRCRAQAANTASASW.

Belongs to the G-protein coupled receptor 1 family.

It is found in the cell membrane. Its function is as follows. Orphan receptor. The sequence is that of Probable G-protein coupled receptor 25 (GPR25) from Homo sapiens (Human).